Here is a 179-residue protein sequence, read N- to C-terminus: uncharacterized protein (179 aa).

The first 27 residues, Met-1–Ala-27, serve as a signal peptide directing secretion. Cys-43 and Cys-83 are disulfide-bonded.

Belongs to the fimbrial protein family.

The protein resides in the fimbrium. Part of the yfcOPQRSUV fimbrial operon. Could contribute to adhesion to various surfaces in specific environmental niches. Increases adhesion to eukaryotic T24 bladder epithelial cells in the absence of fim genes. This is an uncharacterized protein from Escherichia coli (strain K12).